Here is a 377-residue protein sequence, read N- to C-terminus: RIB43A-like with coiled-coils protein 2 (377 aa).

Coiled coils occupy residues 217–250 and 282–308; these read NKNQALESAEKKIQERKQEQEDNLAEISNMLRGD and EEIRLVQRQQVQEKLRLQEEERQRDMD.

This sequence belongs to the RIB43A family. As to quaternary structure, microtubule inner protein component of sperm flagellar doublet microtubules. Expressed in trachea multiciliated cells.

It localises to the cytoplasm. Its subcellular location is the cytoskeleton. The protein localises to the cilium axoneme. The protein resides in the flagellum axoneme. In terms of biological role, microtubule inner protein (MIP) part of the dynein-decorated doublet microtubules (DMTs) in cilia axoneme, which is required for motile cilia beating. The sequence is that of RIB43A-like with coiled-coils protein 2 from Bos taurus (Bovine).